We begin with the raw amino-acid sequence, 348 residues long: Probable dual-specificity RNA methyltransferase RlmN (348 aa).

Catalysis depends on Glu89, which acts as the Proton acceptor. One can recognise a Radical SAM core domain in the interval 95-330; the sequence is ERDHYTLCVS…NFVRFSKGVE (236 aa). Cys102 and Cys335 are oxidised to a cystine. [4Fe-4S] cluster-binding residues include Cys109, Cys113, and Cys116. S-adenosyl-L-methionine-binding positions include 157-158, Ser189, 214-216, and Asn292; these read GE and SLN. Cys335 (S-methylcysteine intermediate) is an active-site residue.

It belongs to the radical SAM superfamily. RlmN family. [4Fe-4S] cluster is required as a cofactor.

It localises to the cytoplasm. The enzyme catalyses adenosine(2503) in 23S rRNA + 2 reduced [2Fe-2S]-[ferredoxin] + 2 S-adenosyl-L-methionine = 2-methyladenosine(2503) in 23S rRNA + 5'-deoxyadenosine + L-methionine + 2 oxidized [2Fe-2S]-[ferredoxin] + S-adenosyl-L-homocysteine. The catalysed reaction is adenosine(37) in tRNA + 2 reduced [2Fe-2S]-[ferredoxin] + 2 S-adenosyl-L-methionine = 2-methyladenosine(37) in tRNA + 5'-deoxyadenosine + L-methionine + 2 oxidized [2Fe-2S]-[ferredoxin] + S-adenosyl-L-homocysteine. Its function is as follows. Specifically methylates position 2 of adenine 2503 in 23S rRNA and position 2 of adenine 37 in tRNAs. The protein is Probable dual-specificity RNA methyltransferase RlmN of Aquifex aeolicus (strain VF5).